The following is a 142-amino-acid chain: Large ribosomal subunit protein uL11 (142 aa).

This sequence belongs to the universal ribosomal protein uL11 family. Part of the ribosomal stalk of the 50S ribosomal subunit. Interacts with L10 and the large rRNA to form the base of the stalk. L10 forms an elongated spine to which L12 dimers bind in a sequential fashion forming a multimeric L10(L12)X complex. One or more lysine residues are methylated.

Its function is as follows. Forms part of the ribosomal stalk which helps the ribosome interact with GTP-bound translation factors. The sequence is that of Large ribosomal subunit protein uL11 from Tolumonas auensis (strain DSM 9187 / NBRC 110442 / TA 4).